Reading from the N-terminus, the 447-residue chain is Tol-Pal system protein TolB (447 aa).

Residues 1 to 29 (MITMSRIRSLAAFAVFVILGVAAVLPAQA) form the signal peptide.

It belongs to the TolB family. As to quaternary structure, the Tol-Pal system is composed of five core proteins: the inner membrane proteins TolA, TolQ and TolR, the periplasmic protein TolB and the outer membrane protein Pal. They form a network linking the inner and outer membranes and the peptidoglycan layer.

The protein resides in the periplasm. In terms of biological role, part of the Tol-Pal system, which plays a role in outer membrane invagination during cell division and is important for maintaining outer membrane integrity. The sequence is that of Tol-Pal system protein TolB from Paramagnetospirillum magneticum (strain ATCC 700264 / AMB-1) (Magnetospirillum magneticum).